We begin with the raw amino-acid sequence, 311 residues long: Acetyl-coenzyme A carboxylase carboxyl transferase subunit alpha (311 aa).

Residues 34 to 286 (EKDLQKEASK…KEYYLQNIRE (253 aa)) form the CoA carboxyltransferase C-terminal domain.

This sequence belongs to the AccA family. Acetyl-CoA carboxylase is a heterohexamer composed of biotin carboxyl carrier protein (AccB), biotin carboxylase (AccC) and two subunits each of ACCase subunit alpha (AccA) and ACCase subunit beta (AccD).

The protein resides in the cytoplasm. The catalysed reaction is N(6)-carboxybiotinyl-L-lysyl-[protein] + acetyl-CoA = N(6)-biotinyl-L-lysyl-[protein] + malonyl-CoA. The protein operates within lipid metabolism; malonyl-CoA biosynthesis; malonyl-CoA from acetyl-CoA: step 1/1. Its function is as follows. Component of the acetyl coenzyme A carboxylase (ACC) complex. First, biotin carboxylase catalyzes the carboxylation of biotin on its carrier protein (BCCP) and then the CO(2) group is transferred by the carboxyltransferase to acetyl-CoA to form malonyl-CoA. This Nitratiruptor sp. (strain SB155-2) protein is Acetyl-coenzyme A carboxylase carboxyl transferase subunit alpha.